Here is a 962-residue protein sequence, read N- to C-terminus: Glycine dehydrogenase (decarboxylating) (962 aa).

Position 709 is an N6-(pyridoxal phosphate)lysine (lysine 709).

Belongs to the GcvP family. As to quaternary structure, the glycine cleavage system is composed of four proteins: P, T, L and H. Pyridoxal 5'-phosphate serves as cofactor.

It carries out the reaction N(6)-[(R)-lipoyl]-L-lysyl-[glycine-cleavage complex H protein] + glycine + H(+) = N(6)-[(R)-S(8)-aminomethyldihydrolipoyl]-L-lysyl-[glycine-cleavage complex H protein] + CO2. Functionally, the glycine cleavage system catalyzes the degradation of glycine. The P protein binds the alpha-amino group of glycine through its pyridoxal phosphate cofactor; CO(2) is released and the remaining methylamine moiety is then transferred to the lipoamide cofactor of the H protein. The sequence is that of Glycine dehydrogenase (decarboxylating) from Shewanella putrefaciens (strain CN-32 / ATCC BAA-453).